Reading from the N-terminus, the 90-residue chain is Small ribosomal subunit protein uS15c (90 aa).

Belongs to the universal ribosomal protein uS15 family. As to quaternary structure, part of the 30S ribosomal subunit.

It is found in the plastid. This is Small ribosomal subunit protein uS15c (rps15) from Cuscuta reflexa (Southern Asian dodder).